The following is a 209-amino-acid chain: Dual-specificity protein phosphatase SDP1 (209 aa).

Polar residues predominate over residues 1–11 (MNIYTSPTRTP). The segment at 1 to 43 (MNIYTSPTRTPNIAPKSGQRPSLPMLATDERSTDKESPNEDRE) is disordered. Basic and acidic residues predominate over residues 28 to 43 (TDERSTDKESPNEDRE). C47 and C142 are oxidised to a cystine. The region spanning 59 to 196 (GPLLVLPEKI…LMEWEVALNA (138 aa)) is the Tyrosine-protein phosphatase domain. H111 lines the 4-O-phospho-L-tyrosine pocket. C140 (phosphocysteine intermediate) is an active-site residue.

The protein belongs to the protein-tyrosine phosphatase family. Non-receptor class dual specificity subfamily.

It carries out the reaction O-phospho-L-tyrosyl-[protein] + H2O = L-tyrosyl-[protein] + phosphate. Functionally, mediates dephosphorylation of MAPK substrates such as SLT2, acquiring enhanced catalytic activity under oxidative conditions. This chain is Dual-specificity protein phosphatase SDP1 (SDP1), found in Saccharomyces cerevisiae (strain ATCC 204508 / S288c) (Baker's yeast).